The sequence spans 197 residues: Nucleoside triphosphate pyrophosphatase (197 aa).

The active-site Proton acceptor is the aspartate 72.

The protein belongs to the Maf family. Requires a divalent metal cation as cofactor.

It localises to the cytoplasm. It carries out the reaction a ribonucleoside 5'-triphosphate + H2O = a ribonucleoside 5'-phosphate + diphosphate + H(+). The enzyme catalyses a 2'-deoxyribonucleoside 5'-triphosphate + H2O = a 2'-deoxyribonucleoside 5'-phosphate + diphosphate + H(+). In terms of biological role, nucleoside triphosphate pyrophosphatase. May have a dual role in cell division arrest and in preventing the incorporation of modified nucleotides into cellular nucleic acids. The sequence is that of Nucleoside triphosphate pyrophosphatase from Corynebacterium glutamicum (strain ATCC 13032 / DSM 20300 / JCM 1318 / BCRC 11384 / CCUG 27702 / LMG 3730 / NBRC 12168 / NCIMB 10025 / NRRL B-2784 / 534).